Reading from the N-terminus, the 307-residue chain is tRNA dimethylallyltransferase 2 (307 aa).

Residue Gly-11–Thr-18 coordinates ATP. Substrate is bound at residue Thr-13–Thr-18. An interaction with substrate tRNA region spans residues Asp-36–Gln-39.

The protein belongs to the IPP transferase family. As to quaternary structure, monomer. Mg(2+) serves as cofactor.

The catalysed reaction is adenosine(37) in tRNA + dimethylallyl diphosphate = N(6)-dimethylallyladenosine(37) in tRNA + diphosphate. Catalyzes the transfer of a dimethylallyl group onto the adenine at position 37 in tRNAs that read codons beginning with uridine, leading to the formation of N6-(dimethylallyl)adenosine (i(6)A). The protein is tRNA dimethylallyltransferase 2 of Phocaeicola vulgatus (strain ATCC 8482 / DSM 1447 / JCM 5826 / CCUG 4940 / NBRC 14291 / NCTC 11154) (Bacteroides vulgatus).